The following is a 390-amino-acid chain: Queuine tRNA-ribosyltransferase (390 aa).

Asp-90 acts as the Proton acceptor in catalysis. Substrate is bound by residues 90 to 94, Asp-144, Gln-197, and Gly-224; that span reads DSGGF. The interval 255 to 261 is RNA binding; that stretch reads GVGTPED. Residue Asp-274 is the Nucleophile of the active site. Positions 279–283 are RNA binding; important for wobble base 34 recognition; the sequence is TRNAR. The Zn(2+) site is built by Cys-312, Cys-314, Cys-317, and His-354.

This sequence belongs to the queuine tRNA-ribosyltransferase family. In terms of assembly, homodimer. Within each dimer, one monomer is responsible for RNA recognition and catalysis, while the other monomer binds to the replacement base PreQ1. Requires Zn(2+) as cofactor.

The enzyme catalyses 7-aminomethyl-7-carbaguanine + guanosine(34) in tRNA = 7-aminomethyl-7-carbaguanosine(34) in tRNA + guanine. Its pathway is tRNA modification; tRNA-queuosine biosynthesis. Catalyzes the base-exchange of a guanine (G) residue with the queuine precursor 7-aminomethyl-7-deazaguanine (PreQ1) at position 34 (anticodon wobble position) in tRNAs with GU(N) anticodons (tRNA-Asp, -Asn, -His and -Tyr). Catalysis occurs through a double-displacement mechanism. The nucleophile active site attacks the C1' of nucleotide 34 to detach the guanine base from the RNA, forming a covalent enzyme-RNA intermediate. The proton acceptor active site deprotonates the incoming PreQ1, allowing a nucleophilic attack on the C1' of the ribose to form the product. After dissociation, two additional enzymatic reactions on the tRNA convert PreQ1 to queuine (Q), resulting in the hypermodified nucleoside queuosine (7-(((4,5-cis-dihydroxy-2-cyclopenten-1-yl)amino)methyl)-7-deazaguanosine). This Leptothrix cholodnii (strain ATCC 51168 / LMG 8142 / SP-6) (Leptothrix discophora (strain SP-6)) protein is Queuine tRNA-ribosyltransferase.